Here is a 101-residue protein sequence, read N- to C-terminus: Movement protein (101 aa).

The interval 1 to 22 (MDPQNSFLLQPRVPTAAPTSGG) is disordered. Residues 30–50 (EVAILSFVGLICFYLLYLWVL) form a helical membrane-spanning segment. Positions 79–101 (NPIPNTQAPPSQGNPGPFVPGTG) are disordered. Residues 80–92 (PIPNTQAPPSQGN) show a composition bias toward polar residues.

It belongs to the mastrevirus movement protein family. In terms of assembly, interacts with the capsid protein (CP). Part of a MP-CP-viral DNA complex.

Its subcellular location is the host membrane. Its function is as follows. Involved in the viral transport within, and between cells. In Avena sativa (Oat), this protein is Movement protein.